Here is a 195-residue protein sequence, read N- to C-terminus: BAG family molecular chaperone regulator 1A (195 aa).

Residues 6-72 (STVTIHYGNQ…KLGLKNHSKI (67 aa)) form the Ubiquitin-like domain. The segment at 78 to 98 (HKQQRGSKEKDTVEPAPKAEA) is disordered. Basic and acidic residues predominate over residues 83 to 98 (GSKEKDTVEPAPKAEA). The region spanning 109-190 (EIKAIDQYVD…KMLDHVDQTS (82 aa)) is the BAG domain.

Binds to the ATPase domain of HSP70/HSC chaperones.

Functionally, inhibits the chaperone activity of HSP70/HSC70 by promoting substrate release. The protein is BAG family molecular chaperone regulator 1A (bag101) of Schizosaccharomyces pombe (strain 972 / ATCC 24843) (Fission yeast).